A 248-amino-acid chain; its full sequence is Granulin (248 aa).

The protein belongs to the polyhedrin family.

Functionally, component of the virus occlusion bodies, which are large proteinaceous structures, that protect the virus from the outside environment for extended periods until they are ingested by insect larvae. This chain is Granulin, found in Xestia c-nigrum granulosis virus (XnGV).